Reading from the N-terminus, the 858-residue chain is MVNFTVDQIRAIMDKKANIRNMSVIAHVDHGKSTLTDSLVCKAGIIASARAGETRFTDTRKDEQERCITIKSTAISLFYELSENDLNFIKQSKDGSGFLINLIDSPGHVDFSSEVTAALRVTDGALVVVDCVSGVCVQTETVLRQAIAERIKPVLMMNKMDRALLELQLEPEELYQTFQRIVENVNVIISTYGEGESGPMGNIMIDPVLGTVGFGSGLHGWAFTLKQFAEMYVAKFAAKGEGQLGAAERAKKVEDMMKKLWGDRYFDPANGKFSKSANSPDGKKLPRTFCQLILDPIFKVFDAIMNFRKEETAKLIEKLDIKLDSEDKDKEGKPLLKAVMRRWLPAGDALLQMITIHLPSPVTAQKYRCELLYEGPPDDEAAMGIKSCDPKGPLMMYISKMVPTSDKGRFYAFGRVFSGVVSTGLKVRIMGPNYTPGKKEDLYLKPIQRTILMMGRYVEPIEDVPCGNIVGLVGVDQFLVKTGTITTFEHAHNMRVMKFSVSPVVRVAVEAKNPADLPKLVEGLKRLAKSDPMVQCIIEESGEHIIAGAGELHLEICLKDLEEDHACIPIKKSDPVVSYRETVSEESNVLCLSKSPNKHNRLYMKARPFPDGLAEDIDKGEVSARQELKARARYLAEKYEWDVAEARKIWCFGPDGTGPNILTDITKGVQYLNEIKDSVVAGFQWATKEGALCEENMRGVRFDVHDVTLHADAIHRGGGQIIPTARRCLYASVLTAQPRLMEPIYLVEIQCPEQVVGGIYGVLNRKRGHVFEESQVAGTPMFVVKAYLPVNESFGFTADLRSNTGGQAFPQCVFDHWQILPGDPFDNSSRPSQVVAETRKRKGLKEGIPALDNFLDKL.

The tr-type G domain maps to 17–362 (ANIRNMSVIA…MITIHLPSPV (346 aa)). GTP is bound at residue 26–33 (AHVDHGKS). Position 54 is a phosphothreonine (T54). Residue T57 is modified to Phosphothreonine; by EEF2K. Position 59 is a phosphothreonine (T59). K152 is subject to N6-succinyllysine. Residues 158 to 161 (NKMD) and 216 to 218 (SGL) each bind GTP. K235 carries the post-translational modification N6-acetyllysine. K239 bears the N6-acetyllysine; alternate mark. Residue K239 forms a Glycyl lysine isopeptide (Lys-Gly) (interchain with G-Cter in SUMO1); alternate linkage. The residue at position 265 (Y265) is a Phosphotyrosine; by CSK. At K272 the chain carries N6-acetyllysine; alternate. K272 is subject to N6-succinyllysine; alternate. At K275 the chain carries N6-acetyllysine. A Glycyl lysine isopeptide (Lys-Gly) (interchain with G-Cter in SUMO) cross-link involves residue K322. Residue S325 is modified to Phosphoserine. Y373 is subject to Phosphotyrosine; by CSK. A Phosphothreonine modification is found at T435. Residues K439 and K445 each carry the N6-acetyllysine modification. At S502 the chain carries Phosphoserine. The residue at position 525 (K525) is an N6,N6,N6-trimethyllysine; by EEF2KMT. K529 participates in a covalent cross-link: Glycyl lysine isopeptide (Lys-Gly) (interchain with G-Cter in SUMO). Position 572 is an N6-succinyllysine (K572). The residue at position 595 (S595) is a Phosphoserine; by CDK2. K619 carries the N6-acetyllysine modification. A Diphthamide modification is found at H715.

The protein belongs to the TRAFAC class translation factor GTPase superfamily. Classic translation factor GTPase family. EF-G/EF-2 subfamily. Binds to 80S ribosomes. Actively translating ribosomes show mutually exclusive binding of eIF5a (EIF5A or EIF5A2) and EEF2/eEF2. Interacts with SERBP1; interaction sequesters EEF2/eEF2 at the A-site of the ribosome, thereby blocking the interaction sites of the mRNA-tRNA complex, promoting ribosome stabilization and hibernation. Interacts with HABP4; interaction takes place at the A-site of hibernating ribosomes and promotes ribosome stabilization. Component of the mRNA surveillance SURF complex, at least composed of ERF1, ERF3 (ERF3A or ERF3B), EEF2, UPF1/RENT1, SMG1, SMG8 and SMG9. Interacts with RBPMS2. Diphthamide is 2-[3-carboxyamido-3-(trimethyl-ammonio)propyl]histidine. Post-translationally, phosphorylation by EF-2 kinase completely inactivates EF-2; it requires prior phosphorylation by CDK2 at Ser-595 during mitotic prometaphase. Phosphorylation by CSK promotes SUMOylation, proteolytic cleavage, and nuclear translocation if the C-terminal fragment. In terms of processing, proteolytically processed at two sites following phosphorylation by CSK. SUMOylated following phosphorylation by CSK, promotes proteolytic cleavage. Post-translationally, ISGylated.

It is found in the cytoplasm. Its subcellular location is the nucleus. It catalyses the reaction GTP + H2O = GDP + phosphate + H(+). Functionally, catalyzes the GTP-dependent ribosomal translocation step during translation elongation. During this step, the ribosome changes from the pre-translocational (PRE) to the post-translocational (POST) state as the newly formed A-site-bound peptidyl-tRNA and P-site-bound deacylated tRNA move to the P and E sites, respectively. Catalyzes the coordinated movement of the two tRNA molecules, the mRNA and conformational changes in the ribosome. This Rattus norvegicus (Rat) protein is Elongation factor 2 (Eef2).